The following is a 480-amino-acid chain: ATP-grasp enzyme ankG (480 aa).

The segment at 1–30 is disordered; the sequence is MYQISLKATKSAAEPTSSTDASHDDRQVER. Residues 21-30 show a composition bias toward basic and acidic residues; it reads ASHDDRQVER.

It carries out the reaction NK13650 D + L-aspartate + ATP = NK13650 C + AMP + diphosphate + H(+). The enzyme catalyses NK13650 B + L-aspartate + ATP = NK13650 A + AMP + diphosphate + H(+). It participates in secondary metabolite biosynthesis. Its function is as follows. ATP-grasp enzyme; part of the ank cluster that mediates the biosynthesis of NK13650 C, a highly modified cyclo-arginine-tyrosine dipeptide. AnkG catalyzes the last step of the pathway via amidation NK13650 D with L-Asp to produce NK13650 C. AnkG also amidates NK13650 B into NK13650 A. Within the pathway, the cyclodipeptide synthase ankA acts as the scaffold-generating enzyme and is responsible for formation of the cyclo-Arg-Tyr diketopiperazine (cRY) from L-Arg and L-Tyr. The ankA product cRY is desaturated by the cytochrome P450 monooxygenase ankB to yield a dehydro-cyclodipeptide intermediate. The FAD-dependent monooxygenase ankC then installs the m-OH, ankD catalyzes the attachment of L-homoserine, and ankE ligates citrate to the ankD product to yield NK13650 B. The O-methyltransferase ankF is responsible for methylation of the C-17 phenol group of NK13650 B to produce NK13650 D. Amidation of NK13650 D with L-Asp by ankG then leads to the production of NK13650 C, whereas amidation of NK13650 B produces NK13650 A. The sequence is that of ATP-grasp enzyme ankG from Aspergillus thermomutatus (Neosartorya pseudofischeri).